The sequence spans 167 residues: MFPMVTGFMNYGHQTVRAARYIGQGFMITLSHANRLPVTIQYPYEKLITSERFRGRIHFEFDKCIACEVCVRVCPIDLPVVDWKFETDIRKKRLLNYSIDFGICIFCGNCVEYCPTNCLSMTEEYELSTYDRHELNYNQIALGRLPMSVIDDYTIRTVLNSIQRKTQ.

2 consecutive 4Fe-4S ferredoxin-type domains span residues 55 to 84 (GRIHFEFDKCIACEVCVRVCPIDLPVVDWK) and 95 to 124 (LNYSIDFGICIFCGNCVEYCPTNCLSMTEE). Residues Cys-64, Cys-67, Cys-70, Cys-74, Cys-104, Cys-107, Cys-110, and Cys-114 each coordinate [4Fe-4S] cluster.

Belongs to the complex I 23 kDa subunit family. NDH is composed of at least 16 different subunits, 5 of which are encoded in the nucleus. The cofactor is [4Fe-4S] cluster.

The protein localises to the plastid. Its subcellular location is the chloroplast thylakoid membrane. It carries out the reaction a plastoquinone + NADH + (n+1) H(+)(in) = a plastoquinol + NAD(+) + n H(+)(out). The catalysed reaction is a plastoquinone + NADPH + (n+1) H(+)(in) = a plastoquinol + NADP(+) + n H(+)(out). In terms of biological role, NDH shuttles electrons from NAD(P)H:plastoquinone, via FMN and iron-sulfur (Fe-S) centers, to quinones in the photosynthetic chain and possibly in a chloroplast respiratory chain. The immediate electron acceptor for the enzyme in this species is believed to be plastoquinone. Couples the redox reaction to proton translocation, and thus conserves the redox energy in a proton gradient. The sequence is that of NAD(P)H-quinone oxidoreductase subunit I, chloroplastic from Gossypium barbadense (Sea Island cotton).